Consider the following 437-residue polypeptide: tRNA-queuosine alpha-mannosyltransferase (437 aa).

This sequence belongs to the glycosyltransferase group 1 family. Glycosyltransferase 4 subfamily.

The protein resides in the cytoplasm. It localises to the nucleus. The catalysed reaction is queuosine(34) in tRNA(Asp) + GDP-alpha-D-mannose = O-4''-alpha-D-mannosylqueuosine(34) in tRNA(Asp) + GDP + H(+). In terms of biological role, glycosyltransferase that specifically catalyzes mannosylation of cytoplasmic tRNA(Asp) modified with queuosine at position 34 (queuosine(34)). Mannosylates the cyclopentene moiety of queuosine(34) in tRNA(Asp) to form mannosyl-queuosine(34). Mannosylation of queuosine(34) in tRNA(Asp) is required to slow-down elongation at cognate codons, GAC and GAU, thereby regulating protein translation. This chain is tRNA-queuosine alpha-mannosyltransferase (gtdc1), found in Xenopus tropicalis (Western clawed frog).